The following is a 224-amino-acid chain: MRKIVTIDGPSGVGKGTVAQALARRHGWAYLDSGAVYRLAALFLKRQNLSLAATATQVAALQEMAVDFVMTETVVRVFLNGVAIDDVLRREETGALASQLAVKPEIRAALLDFQRNFAGDAPLIADGRDMGTVVFPEAPLKIFLDATAEIRAERRYKQLIEKGEDVTLAALKKEIAARDARDRNRLVAPLKPASDAVLIDTTDLSVQAVLEKIDALWQAHFFNF.

Glycine 9–threonine 17 is a binding site for ATP.

Belongs to the cytidylate kinase family. Type 1 subfamily.

It is found in the cytoplasm. The catalysed reaction is CMP + ATP = CDP + ADP. It catalyses the reaction dCMP + ATP = dCDP + ADP. In Dichelobacter nodosus (strain VCS1703A), this protein is Cytidylate kinase.